The primary structure comprises 163 residues: MAKESSFDIVSKVELPEVTNAINIALKEIQNRYDFKGSKSDIKLEKEVLVLTSDDAFKLDQVKDVLISKLVKRNVPIKNLDYGKVETASGNTVRQRATLQQGIDKDNAKKINNIIKEMKLKVKTQVQDDQVRVTAKSRDDLQAVIAAVRSVDLPIDVQFINYR.

The protein belongs to the YajQ family.

Functionally, nucleotide-binding protein. The polypeptide is Nucleotide-binding protein BcerKBAB4_1061 (Bacillus mycoides (strain KBAB4) (Bacillus weihenstephanensis)).